The primary structure comprises 119 residues: Fluoride-specific ion channel FluC (119 aa).

4 helical membrane passes run 5–25 (IIPL…LNLA), 34–54 (TGNL…AETI), 59–79 (WKLL…GFSL), and 97–117 (IFLH…IGAA). Positions 69 and 72 each coordinate Na(+).

This sequence belongs to the fluoride channel Fluc/FEX (TC 1.A.43) family.

The protein localises to the cell inner membrane. It catalyses the reaction fluoride(in) = fluoride(out). With respect to regulation, na(+) is not transported, but it plays an essential structural role and its presence is essential for fluoride channel function. Fluoride-specific ion channel. Important for reducing fluoride concentration in the cell, thus reducing its toxicity. The chain is Fluoride-specific ion channel FluC from Neisseria meningitidis serogroup C / serotype 2a (strain ATCC 700532 / DSM 15464 / FAM18).